Reading from the N-terminus, the 212-residue chain is Ribonuclease HII (212 aa).

Residues glutamate 12 to isoleucine 201 form the RNase H type-2 domain. Aspartate 18, glutamate 19, and aspartate 110 together coordinate a divalent metal cation.

It belongs to the RNase HII family. It depends on Mn(2+) as a cofactor. Mg(2+) serves as cofactor.

It localises to the cytoplasm. It catalyses the reaction Endonucleolytic cleavage to 5'-phosphomonoester.. Functionally, endonuclease that specifically degrades the RNA of RNA-DNA hybrids. The protein is Ribonuclease HII of Stutzerimonas stutzeri (strain A1501) (Pseudomonas stutzeri).